Reading from the N-terminus, the 1241-residue chain is Anion exchange protein 2 (1241 aa).

A disordered region spans residues 1-240; that stretch reads MSSAPRRPAK…RSYNLQERRR (240 aa). Over 1–707 the chain is Cytoplasmic; the sequence is MSSAPRRPAK…SDFRDALDPQ (707 aa). 2 stretches are compositionally biased toward basic and acidic residues: residues 37 to 49 and 58 to 75; these read ELHRTLGVERFEE and GGEEPGRSYGEEDFEYHR. Basic residues-rich tracts occupy residues 76–85 and 94–110; these read QSSHHIHHPL and RRRKTPQGPGRKPRRRP. 6 positions are modified to phosphoserine: S113, S132, S144, S170, S172, and S173. Residues 120-133 show a composition bias toward acidic residues; the sequence is TIEEGEEDEDEASE. Residues 141–155 are compositionally biased toward low complexity; sequence TQPSPVSTPSSVQFF. T183 carries the post-translational modification Phosphothreonine. Low complexity predominate over residues 189–209; sequence GAQAGTQVEEAEAEAVAVASG. Residues 210-219 show a composition bias toward gly residues; the sequence is TAGGDDGGAS. Position 243 is a phosphoserine (S243). T257 bears the Phosphothreonine mark. At K274 the chain carries N6-methyllysine. The segment at 288–320 is disordered; sequence LVRKNAKGSTQSGREGREPGPTPRARPRAPHKP. Residue S443 is modified to Phosphoserine. The segment at 449–471 is disordered; sequence SLLGHHHGQGAESDPHVTEPLMG. Helical transmembrane passes span 708–731, 737–774, 784–816, and 826–847; these read CLAAVIFIYFAALSPAITFGGLLG, LIGVSELIMSTALQGVVFCLLGAQPLLVIGFSGPLLVF, SNHLEYLVGRVWIGFWLVFLALLMVALEGSFLV, and IFAFLISLIFIYETFYKLVKIF. The segment at 708 to 1241 is membrane (anion exchange); it reads CLAAVIFIYF…DEYNEMPMPV (534 aa). Residues 848 to 900 lie on the Extracellular side of the membrane; that stretch reads QEHPLHGCSASNSSEVDGGENMTWAGARPTLGPGNRSLAGQSGQGKPRGQPNT. N-linked (GlcNAc...) asparagine glycans are attached at residues N859, N868, and N882. Residues 901–918 form a helical membrane-spanning segment; it reads ALLSLVLMAGTFFIAFFL. At 919–933 the chain is on the cytoplasmic side; that stretch reads RKFKNSRFFPGRIRR. A run of 5 helical transmembrane segments spans residues 934–954, 988–1010, 1036–1059, 1091–1136, and 1163–1199; these read VIGDFGVPIAILIMVLVDYSI, PFPVWMMVASLLPAILVFILIFM, LLLIVAMGGICALFGLPWLAAATV, VTGL…IQFY, and MHLFTALQLLCLALLWAVMSTAASLAFPFILILTVPL. C1173 is lipidated: S-palmitoyl cysteine.

The protein belongs to the anion exchanger (TC 2.A.31) family. Expressed in the liver, stomach, kidney, prostate, thyroid and rectum. As to expression, expressed in the liver and kidney.

The protein resides in the apical cell membrane. It localises to the basolateral cell membrane. It carries out the reaction hydrogencarbonate(in) + chloride(out) = hydrogencarbonate(out) + chloride(in). Functionally, sodium-independent anion exchanger which mediates the electroneutral exchange of chloride for bicarbonate ions across the cell membrane. Plays an important role in osteoclast differentiation and function. Regulates bone resorption and calpain-dependent actin cytoskeleton organization in osteoclasts via anion exchange-dependent control of pH. Essential for intracellular pH regulation in CD8(+) T-cells upon CD3 stimulation, modulating CD8(+) T-cell responses. The sequence is that of Anion exchange protein 2 (SLC4A2) from Homo sapiens (Human).